A 274-amino-acid chain; its full sequence is Nitrogenase iron protein (274 aa).

An ATP-binding site is contributed by 8–15 (GKGGIGKS). C94 is a [4Fe-4S] cluster binding site. R97 carries the post-translational modification ADP-ribosylarginine; by dinitrogenase reductase ADP-ribosyltransferase. C131 is a binding site for [4Fe-4S] cluster.

It belongs to the NifH/BchL/ChlL family. In terms of assembly, homodimer. It depends on [4Fe-4S] cluster as a cofactor. The reversible ADP-ribosylation of Arg-97 inactivates the nitrogenase reductase and regulates nitrogenase activity.

It catalyses the reaction N2 + 8 reduced [2Fe-2S]-[ferredoxin] + 16 ATP + 16 H2O = H2 + 8 oxidized [2Fe-2S]-[ferredoxin] + 2 NH4(+) + 16 ADP + 16 phosphate + 6 H(+). In terms of biological role, the key enzymatic reactions in nitrogen fixation are catalyzed by the nitrogenase complex, which has 2 components: the iron protein and the molybdenum-iron protein. This chain is Nitrogenase iron protein, found in Chlorobium chlorochromatii (strain CaD3).